Reading from the N-terminus, the 62-residue chain is Photosystem II reaction center protein Z (62 aa).

The next 2 helical transmembrane spans lie at 8 to 28 (LVLL…VVLA) and 41 to 61 (YTGA…NSLV).

The protein belongs to the PsbZ family. PSII is composed of 1 copy each of membrane proteins PsbA, PsbB, PsbC, PsbD, PsbE, PsbF, PsbH, PsbI, PsbJ, PsbK, PsbL, PsbM, PsbT, PsbX, PsbY, PsbZ, Psb30/Ycf12, at least 3 peripheral proteins of the oxygen-evolving complex and a large number of cofactors. It forms dimeric complexes.

Its subcellular location is the plastid. It localises to the chloroplast thylakoid membrane. In terms of biological role, may control the interaction of photosystem II (PSII) cores with the light-harvesting antenna, regulates electron flow through the 2 photosystem reaction centers. PSII is a light-driven water plastoquinone oxidoreductase, using light energy to abstract electrons from H(2)O, generating a proton gradient subsequently used for ATP formation. The chain is Photosystem II reaction center protein Z from Pyropia yezoensis (Susabi-nori).